The chain runs to 388 residues: Processive diacylglycerol beta-glucosyltransferase (388 aa).

Belongs to the glycosyltransferase 28 family. UgtP subfamily.

The protein resides in the cell membrane. It catalyses the reaction a 1,2-diacyl-3-O-(beta-D-glucopyranosyl)-sn-glycerol + UDP-alpha-D-glucose = a 1,2-diacyl-3-O-(beta-D-Glc-(1-&gt;6)-beta-D-Glc)-sn-glycerol + UDP + H(+). It carries out the reaction a 1,2-diacyl-3-O-(beta-D-Glc-(1-&gt;6)-beta-D-Glc)-sn-glycerol + UDP-alpha-D-glucose = a 1,2-diacyl-3-O-(beta-D-Glc-(1-&gt;6)-beta-D-Glc-(1-&gt;6)-beta-D-Glc)-sn-glycerol + UDP + H(+). The catalysed reaction is a 1,2-diacyl-sn-glycerol + UDP-alpha-D-glucose = a 1,2-diacyl-3-O-(beta-D-glucopyranosyl)-sn-glycerol + UDP + H(+). It participates in glycolipid metabolism; diglucosyl-diacylglycerol biosynthesis. In terms of biological role, processive glucosyltransferase involved in the biosynthesis of both the bilayer- and non-bilayer-forming membrane glucolipids. Is able to successively transfer up to three glucosyl residues to diacylglycerol (DAG), thereby catalyzing the formation of beta-monoglucosyl-DAG (3-O-(beta-D-glucopyranosyl)-1,2-diacyl-sn-glycerol), beta-diglucosyl-DAG (3-O-(beta-D-glucopyranosyl-beta-(1-&gt;6)-D-glucopyranosyl)-1,2-diacyl-sn-glycerol) and beta-triglucosyl-DAG (3-O-(beta-D-glucopyranosyl-beta-(1-&gt;6)-D-glucopyranosyl-beta-(1-&gt;6)-D-glucopyranosyl)-1,2-diacyl-sn-glycerol). Beta-diglucosyl-DAG is the predominant glycolipid found in Bacillales and is also used as a membrane anchor for lipoteichoic acid (LTA). This is Processive diacylglycerol beta-glucosyltransferase from Bacillus cereus (strain AH187).